Reading from the N-terminus, the 752-residue chain is Xanthine dehydrogenase molybdenum-binding subunit (752 aa).

Mo-molybdopterin contacts are provided by Gln-206, Phe-237, Arg-350, and Ala-516.

It belongs to the xanthine dehydrogenase family. As to quaternary structure, heterotrimer of XdhA, XdhB and XdhC. Mo-molybdopterin is required as a cofactor.

It carries out the reaction xanthine + NAD(+) + H2O = urate + NADH + H(+). The catalysed reaction is hypoxanthine + NAD(+) + H2O = xanthine + NADH + H(+). The protein operates within purine metabolism; hypoxanthine degradation; urate from hypoxanthine: step 1/2. It participates in purine metabolism; hypoxanthine degradation; urate from hypoxanthine: step 2/2. Its function is as follows. Presumed to be a dehydrogenase, but possibly an oxidase. Participates in limited purine salvage (requires aspartate) but does not support aerobic growth on purines as the sole carbon source (purine catabolism). This chain is Xanthine dehydrogenase molybdenum-binding subunit (xdhA), found in Escherichia coli O157:H7.